We begin with the raw amino-acid sequence, 291 residues long: N-acetylmannosamine kinase (291 aa).

Residues 5-12 (AVDIGGTK) and 132-139 (GVGGGIVV) each bind ATP. H156, C166, C168, and C173 together coordinate Zn(2+).

Belongs to the ROK (NagC/XylR) family. NanK subfamily. In terms of assembly, homodimer.

It catalyses the reaction an N-acyl-D-mannosamine + ATP = an N-acyl-D-mannosamine 6-phosphate + ADP + H(+). It functions in the pathway amino-sugar metabolism; N-acetylneuraminate degradation; D-fructose 6-phosphate from N-acetylneuraminate: step 2/5. Functionally, catalyzes the phosphorylation of N-acetylmannosamine (ManNAc) to ManNAc-6-P. The polypeptide is N-acetylmannosamine kinase (nanK2) (Escherichia coli O6:H1 (strain CFT073 / ATCC 700928 / UPEC)).